Reading from the N-terminus, the 256-residue chain is DNA repair protein RecO (256 aa).

It belongs to the RecO family.

Its function is as follows. Involved in DNA repair and RecF pathway recombination. This chain is DNA repair protein RecO, found in Rhizobium johnstonii (strain DSM 114642 / LMG 32736 / 3841) (Rhizobium leguminosarum bv. viciae).